Here is a 311-residue protein sequence, read N- to C-terminus: Ornithine carbamoyltransferase (311 aa).

Carbamoyl phosphate is bound by residues 54-58 (STRTR), Asn81, Arg104, and 131-134 (HPCQ). L-ornithine-binding positions include Asn164, Asp225, and 229–230 (DM). Residues 268 to 271 (HDMP), Thr279, and Arg297 each bind carbamoyl phosphate.

It belongs to the aspartate/ornithine carbamoyltransferase superfamily. OTCase family.

The protein localises to the cytoplasm. It catalyses the reaction carbamoyl phosphate + L-ornithine = L-citrulline + phosphate + H(+). It functions in the pathway amino-acid biosynthesis; L-arginine biosynthesis; L-arginine from L-ornithine and carbamoyl phosphate: step 1/3. Functionally, reversibly catalyzes the transfer of the carbamoyl group from carbamoyl phosphate (CP) to the N(epsilon) atom of ornithine (ORN) to produce L-citrulline. In Leptospira interrogans serogroup Icterohaemorrhagiae serovar copenhageni (strain Fiocruz L1-130), this protein is Ornithine carbamoyltransferase (argF).